Reading from the N-terminus, the 94-residue chain is Histone-like DNA-binding protein (94 aa).

This sequence belongs to the bacterial histone-like protein family.

This chain is Histone-like DNA-binding protein, found in Rickettsia bellii (strain RML369-C).